The following is a 116-amino-acid chain: uncharacterized protein (116 aa).

Residues 89–109 (VGFVILILLYILTNPNAIELI) traverse the membrane as a helical segment.

It belongs to the M.jannaschii MJ0023/MJ0349/MJ1072/MJ1074/MJ1107/MJECL16 family.

It localises to the membrane. This is an uncharacterized protein from Methanocaldococcus jannaschii (strain ATCC 43067 / DSM 2661 / JAL-1 / JCM 10045 / NBRC 100440) (Methanococcus jannaschii).